The primary structure comprises 425 residues: Enolase (425 aa).

(2R)-2-phosphoglycerate is bound at residue glutamine 163. The active-site Proton donor is the glutamate 205. Residues aspartate 242, glutamate 285, and aspartate 312 each contribute to the Mg(2+) site. (2R)-2-phosphoglycerate-binding residues include lysine 337, arginine 366, serine 367, and lysine 388. The active-site Proton acceptor is lysine 337.

This sequence belongs to the enolase family. Mg(2+) serves as cofactor.

The protein localises to the cytoplasm. It localises to the secreted. The protein resides in the cell surface. The enzyme catalyses (2R)-2-phosphoglycerate = phosphoenolpyruvate + H2O. It participates in carbohydrate degradation; glycolysis; pyruvate from D-glyceraldehyde 3-phosphate: step 4/5. Its function is as follows. Catalyzes the reversible conversion of 2-phosphoglycerate (2-PG) into phosphoenolpyruvate (PEP). It is essential for the degradation of carbohydrates via glycolysis. The chain is Enolase from Acidiphilium cryptum (strain JF-5).